The following is a 495-amino-acid chain: Catalase B (495 aa).

Positions 1–25 (MSNNKKLTSLFGAPVSDRENSMTAG) are disordered. Catalysis depends on residues His55 and Asn128. Residue Tyr338 participates in heme binding.

Belongs to the catalase family. As to quaternary structure, homodimer. Requires heme as cofactor.

It carries out the reaction 2 H2O2 = O2 + 2 H2O. In terms of biological role, decomposes hydrogen peroxide into water and oxygen; serves to protect cells from the toxic effects of hydrogen peroxide. The polypeptide is Catalase B (katB) (Staphylococcus xylosus).